We begin with the raw amino-acid sequence, 312 residues long: Malate dehydrogenase (312 aa).

NAD(+)-binding positions include 12 to 17 and Asp-36; that span reads GAGFTG. Substrate is bound by residues Arg-87 and Arg-93. NAD(+) contacts are provided by residues Asn-100 and 123–125; that span reads LTN. Residue Asn-125 coordinates substrate. At Ser-149 the chain carries Phosphoserine. Arg-156 contributes to the substrate binding site. His-180 acts as the Proton acceptor in catalysis.

The protein belongs to the LDH/MDH superfamily. MDH type 3 family.

The enzyme catalyses (S)-malate + NAD(+) = oxaloacetate + NADH + H(+). Its function is as follows. Catalyzes the reversible oxidation of malate to oxaloacetate. The chain is Malate dehydrogenase from Bacillus mycoides (strain KBAB4) (Bacillus weihenstephanensis).